Consider the following 59-residue polypeptide: Lantipeptide Flvbeta.f (59 aa).

The propeptide at 1–27 (MEKMNNIAGITPENELDEMFDDSVVGA) is cleaved by FlvT. Thr-31 and Thr-32 each carry 2,3-didehydrobutyrine; by FlvM2. 2 cross-links (beta-methyllanthionine (Thr-Cys); by FlvM2) span residues 41-47 (TKNPQIC) and 53-56 (TVKC).

In terms of processing, contains DL-beta-methyllanthionine, when coepressed in E.coli with the flavecin synthetase FlvM2.

The protein localises to the secreted. In terms of biological role, lanthionine-containing peptide that does probably not show antibacterial activity, since its analog [+7]Flvbeta.f does not show antibacterial activity against M.luteus. Also does not show antibiotic activity when tested with [Del2]Flvalpha.a, an analog of Flvalpha.a, which is encoded by the same operon than Flvbeta.f. The bactericidal activity of lantibiotics is based on depolarization of energized bacterial cytoplasmic membranes, initiated by the formation of aqueous transmembrane pores. The chain is Lantipeptide Flvbeta.f from Ruminococcus flavefaciens.